Reading from the N-terminus, the 128-residue chain is Otoraplin (128 aa).

The first 18 residues, 1–18 (MARILILLLGGLVVLCAG), serve as a signal peptide directing secretion. 2 disulfide bridges follow: C32–C37 and C55–C127. In terms of domain architecture, SH3 spans 39-110 (YTISLARAQE…PSNLVKEQRV (72 aa)).

This sequence belongs to the MIA/OTOR family. As to expression, highly expressed in cochlea.

The protein localises to the secreted. The polypeptide is Otoraplin (Otor) (Mus musculus (Mouse)).